The sequence spans 863 residues: Leucine--tRNA ligase (863 aa).

A 'HIGH' region motif is present at residues 42 to 52 (PYPSGKIHMGH). A 'KMSKS' region motif is present at residues 618–622 (KMSKS). Residue K621 participates in ATP binding.

It belongs to the class-I aminoacyl-tRNA synthetase family.

The protein localises to the cytoplasm. The catalysed reaction is tRNA(Leu) + L-leucine + ATP = L-leucyl-tRNA(Leu) + AMP + diphosphate. The protein is Leucine--tRNA ligase of Desulforapulum autotrophicum (strain ATCC 43914 / DSM 3382 / VKM B-1955 / HRM2) (Desulfobacterium autotrophicum).